Consider the following 178-residue polypeptide: Ras-like protein (178 aa).

1-6 (GGVGKS) is a GTP binding site. Positions 21-29 (YDPTIEDSY) match the Effector region motif. GTP contacts are provided by residues 46–50 (DTAGQ) and 105–108 (NKCD). C175 carries the post-translational modification Cysteine methyl ester. A lipid anchor (S-geranylgeranyl cysteine) is attached at C175. Positions 176–178 (SIL) are cleaved as a propeptide — removed in mature form.

This sequence belongs to the small GTPase superfamily. Ras family.

Its subcellular location is the cell membrane. The enzyme catalyses GTP + H2O = GDP + phosphate + H(+). With respect to regulation, alternates between an inactive form bound to GDP and an active form bound to GTP. Activated by a guanine nucleotide-exchange factor (GEF) and inactivated by a GTPase-activating protein (GAP). Ras proteins bind GDP/GTP and possess intrinsic GTPase activity. The chain is Ras-like protein from Artemia salina (Brine shrimp).